We begin with the raw amino-acid sequence, 348 residues long: Outer membrane protein assembly factor BamC (348 aa).

The first 24 residues, 1 to 24, serve as a signal peptide directing secretion; it reads MATLLQTSKVMKVAGLSLVVFLAA. Residue C25 is the site of N-palmitoyl cysteine attachment. C25 is lipidated: S-diacylglycerol cysteine. Positions 211–230 are disordered; that stretch reads SQQQEEAGQNNAKDSGALTV.

This sequence belongs to the BamC family. In terms of assembly, part of the Bam complex, which is composed of the outer membrane protein BamA, and four lipoproteins BamB, BamC, BamD and BamE.

The protein resides in the cell outer membrane. Functionally, part of the outer membrane protein assembly complex, which is involved in assembly and insertion of beta-barrel proteins into the outer membrane. The sequence is that of Outer membrane protein assembly factor BamC from Xenorhabdus nematophila (strain ATCC 19061 / DSM 3370 / CCUG 14189 / LMG 1036 / NCIMB 9965 / AN6).